The following is a 123-amino-acid chain: Prismalin-14 (123 aa).

Residues 1-16 form the signal peptide; the sequence is MRSLLVLLALAACASA.

As to expression, prismatic layer of shell (at protein level). Expressed primarily in the mantle with highest level in the mantle edge and lower level in the mantle pallium.

The protein localises to the secreted. May be involved in calcification of the prismatic layer of the shell. In Margaritifera margaritifera (Freshwater pearl mussel), this protein is Prismalin-14.